A 554-amino-acid chain; its full sequence is 3-(3-hydroxy-phenyl)propionate/3-hydroxycinnamic acid hydroxylase (554 aa).

Residues Gln17 to Lys46 and Phe285 to Asp295 each bind FAD.

It belongs to the PheA/TfdB FAD monooxygenase family. The cofactor is FAD.

It catalyses the reaction 3-(3-hydroxyphenyl)propanoate + NADH + O2 + H(+) = 3-(2,3-dihydroxyphenyl)propanoate + NAD(+) + H2O. The enzyme catalyses (2E)-3-(3-hydroxyphenyl)prop-2-enoate + NADH + O2 + H(+) = (2E)-3-(2,3-dihydroxyphenyl)prop-2-enoate + NAD(+) + H2O. It participates in aromatic compound metabolism; 3-phenylpropanoate degradation. Its function is as follows. Catalyzes the insertion of one atom of molecular oxygen into position 2 of the phenyl ring of 3-(3-hydroxyphenyl)propionate (3-HPP) and hydroxycinnamic acid (3HCI). The polypeptide is 3-(3-hydroxy-phenyl)propionate/3-hydroxycinnamic acid hydroxylase (Escherichia coli (strain K12 / DH10B)).